A 129-amino-acid polypeptide reads, in one-letter code: Natriuretic peptides B (129 aa).

Residues 1–26 (MDPQTALSRALLLLLFLHLSLLGCRS) form the signal peptide. Cys-107 and Cys-123 are joined by a disulfide.

The protein belongs to the natriuretic peptide family. Post-translationally, the precursor molecule is proteolytically cleaved, possibly by FURIN or CORIN, to produce the active peptide. May undergo further proteolytic cleavage by various proteases such as DPP4, MME and possibly FAP, to give rise to a variety of shorter peptides. May be cleaved at Pro-99 by the prolyl endopeptidase FAP (seprase) activity (in vitro). May be degraded by IDE. During IDE degradation, the resulting products initially increase the activation of NPR1 and can also stimulate NPR2 to produce cGMP before the fragments are completely degraded and inactivated by IDE (in vitro).

The protein resides in the secreted. In terms of biological role, cardiac hormone that plays a key role in mediating cardio-renal homeostasis. May also function as a paracrine antifibrotic factor in the heart. Acts by specifically binding and stimulating NPR1 to produce cGMP, which in turn activates effector proteins that drive various biological responses. Involved in regulating the extracellular fluid volume and maintaining the fluid-electrolyte balance through natriuresis, diuresis, vasorelaxation, and inhibition of renin and aldosterone secretion. Binds the clearance receptor NPR3. This chain is Natriuretic peptides B (NPPB), found in Bos taurus (Bovine).